The sequence spans 457 residues: Alkylcitrate synthase phiJ (457 aa).

Residues His328 and Asp384 contribute to the active site.

It belongs to the citrate synthase family.

The catalysed reaction is (2E,10E)-dode-2,10-dicenoyl-CoA + oxaloacetate + H2O = (4E,11E)-2-hydroxytrideca-4,11-dien-1,2,3-tricarboxylate + CoA + H(+). It functions in the pathway secondary metabolite biosynthesis. Its function is as follows. Alkylcitrate synthase; part of the gene cluster that mediates the biosynthesis of the antihypercholesterolemic agents phomoidrides which are dimeric anhydrides. Within the pathway, the alkylcitrate synthase (ACS) phiJ and the alkylcitrate dehydratase (ACDH) phiI produce the decarboxylated monomeric anhydrides by coupling the C12-fatty acyl product from phiA with oxalacetic acid. The pathway begins with the highly reducing polyketide synthase phiA that catalyzes the formation of a C12-fatty acyl-ACP, starting from one acetate and 5 malonate units. The hydrolase phiM is involved in the release of the C12-fatty acyl chain from phiA. The alkylcitrate synthase (ACS) phiJ and the alkylcitrate dehydratase (ACDH) phiI then give rise to decarboxylated monomeric anhydrides by coupling the C12-fatty acyl chain with oxalacetic acid. The cyclase phiC is responsible for the dimerization of the monomeric anhydrides which leads to the production of prephomoidride that contains the characteristic bicyclo[4.3.1]deca-1,6-diene system of phomoidrides. Iterative oxidation catalyzed by the alpha-ketoglutarate-dependent dioxygenase phiK produced then phomoidride A. Finally, the methyltransferase phiE converts phomoidride A to phomoidride B via an acetalization reaction. The phosphatidylethanolamine-binding protein phiB and phiN are not essential for dimerization and their functions have still to be determined. This is Alkylcitrate synthase phiJ from Fungal sp. (strain ATCC 74256).